A 152-amino-acid polypeptide reads, in one-letter code: MHPAHLLVLLAVCVSLLGSSEIPQPSLDFEQFSNMIQCTIPCGESCLAYMDYGCYCGPGGSGTPIDDLDRCCKTHDECYAEAGKLSACKSVLSEPNNDTYSYECNEGQLTCNDDNDECKAFICNCDRTAVTCFAGAPYNDLNYNIGMIEHCK.

Residues 1-19 (MHPAHLLVLLAVCVSLLGS) form the signal peptide. 8 disulfide bridges follow: C38–C104, C42–C46, C54–C151, C56–C72, C71–C132, C78–C125, C88–C118, and C111–C123. N97 carries an N-linked (GlcNAc...) asparagine glycan.

This sequence belongs to the phospholipase A2 family. Group I subfamily. D49 sub-subfamily. As to quaternary structure, heterotrimer of alpha, beta, and gamma chains; non-covalently linked. Contains 0.9% fucose, 2.2% mannose, 4.2% N-acetyl-D-glucosamine, 3.5% galactose, and 3.8% N-acetyl-neuraminic acid (sialic acid). In terms of tissue distribution, expressed by the venom gland.

It localises to the secreted. In terms of biological role, heterotrimer: Snake venom phospholipase A2 (PLA2) heterotrimer that acts as a potent presynaptic neurotoxin by blocking synaptic transmission and synaptic vesicle recycling. May act by binding in a calcium-dependent fashion to neurotonal pentraxin-1 (NPTX1) and neurotonal pentraxin-2 (NPTX2), but not to neuronal pentraxin receptor (NPTXR). Also binds to taipoxin-associated calcium binding protein 49 (RCN2), a protein localized in the lumen of endoplasmic reticulum. Monomer (gamma chain): Snake venom phospholipase A2 homolog that is neither toxic nor enzymatically active. Does not bind calcium. This Oxyuranus scutellatus scutellatus (Australian taipan) protein is Acidic phospholipase A2 homolog taipoxin gamma chain.